Here is a 124-residue protein sequence, read N- to C-terminus: Small ribosomal subunit protein uS12 (124 aa).

Residues 1–25 (MPTINQLIRKPRKSQKEKTASPALQ) are disordered. 3-methylthioaspartic acid is present on Asp-89.

This sequence belongs to the universal ribosomal protein uS12 family. Part of the 30S ribosomal subunit. Contacts proteins S8 and S17. May interact with IF1 in the 30S initiation complex.

Functionally, with S4 and S5 plays an important role in translational accuracy. Its function is as follows. Interacts with and stabilizes bases of the 16S rRNA that are involved in tRNA selection in the A site and with the mRNA backbone. Located at the interface of the 30S and 50S subunits, it traverses the body of the 30S subunit contacting proteins on the other side and probably holding the rRNA structure together. The combined cluster of proteins S8, S12 and S17 appears to hold together the shoulder and platform of the 30S subunit. This chain is Small ribosomal subunit protein uS12, found in Borrelia turicatae (strain 91E135).